Reading from the N-terminus, the 33-residue chain is Mu-theraphotoxin-Ssp1a (33 aa).

Disulfide bonds link Cys2–Cys17, Cys9–Cys22, and Cys16–Cys29. Leucine amide is present on Leu33.

This sequence belongs to the neurotoxin 10 (Hwtx-1) family. 22 (Htx-4) subfamily. In terms of tissue distribution, expressed by the venom gland.

The protein resides in the secreted. Its function is as follows. Gating modifier toxin that traps voltage-sensing domain II of voltage-gated sodium channels in the resting state without significantly altering the voltage-dependence of activation and inactivation, or delay in recovery from inactivation. Inhibits hNav1.7/SCN9A (IC(50)=134 nM), followed in rank order of potency by Nav1.6/SCN8A (IC(50)=191 nM), Nav1.2/SCN2A (IC(50)=239 nM), Nav1.3/SCN3A (IC(50)=547 nM) and Nav1.1/SCN1A (IC(50)=674 nM). Its binding to Nav1.2, Nav1.3 and Nav1.7 is slowly reversible and incomplete, with ~25% of Nav1.2, ~50% of Nav1.3 and ~40% of Nav1.7 channels recovering from block after a 30 minutes washout, respectively. Binds in the aqueous cleft formed between the S1-S2 and S3-S4 loops of each channel subtype, primarily targeting the S3-S4 loop. The chain is Mu-theraphotoxin-Ssp1a from Selenotypus sp. (Feather-legged tarantula).